Here is a 579-residue protein sequence, read N- to C-terminus: Mitogen-activated protein kinase kinase kinase 7 (579 aa).

The segment at Met1–Tyr300 is interaction with MAPK8IP1. In terms of domain architecture, Protein kinase spans Ile36–Phe291. ATP-binding positions include Val42–Val50 and Lys63. Lys72 participates in a covalent cross-link: Glycyl lysine isopeptide (Lys-Gly) (interchain with G-Cter in ubiquitin). The Proton acceptor role is filled by Asp156. Lys158 participates in a covalent cross-link: Glycyl lysine isopeptide (Lys-Gly) (interchain with G-Cter in ubiquitin). Phosphothreonine; by autocatalysis occurs at positions 184 and 187. Phosphoserine; by autocatalysis is present on Ser192. Lys209 participates in a covalent cross-link: Glycyl lysine isopeptide (Lys-Gly) (interchain with G-Cter in ubiquitin). Disordered stretches follow at residues Pro301–Pro339 and Lys354–Asp391. The span at Asp306–Ile322 shows a compositional bias: polar residues. 2 stretches are compositionally biased toward low complexity: residues Thr323 to Asn334 and Ser361 to Ser375. Ser367, Ser389, and Ser412 each carry phosphoserine. The span at Leu416 to Gln425 shows a compositional bias: polar residues. The tract at residues Leu416–Asp466 is disordered. Residues Val426–Arg436 are compositionally biased toward low complexity. Position 428 is a phosphoserine (Ser428).

This sequence belongs to the protein kinase superfamily. STE Ser/Thr protein kinase family. MAP kinase kinase kinase subfamily. In terms of assembly, can form homodimer. Binds both upstream activators and downstream substrates in multimolecular complexes. Interacts with TAB1/MAP3K7IP1, TAB2/MAP3K7IP2 and TAB3/MAP3K7IP3. Identified in the TRIKA2 complex composed of MAP3K7/TAK1, TAB1/MAP3K7IP1 and TAB2/MAP3K7IP2. Interacts with PPM1L and PPM1B/PP2CB. Interaction with PP2A and PPP6C leads to its repressed activity. Interacts with TRAF6 and TAB1/MAP3K7IP1; during IL-1 signaling. Interacts with TAOK1 and TAOK2; interaction with TAOK2 interferes with MAP3K7 interaction with IKKA, thus preventing NF-kappa-B activation. Interacts with DYNC2I2 (via WD domains). Interacts with CYLD and RBCK1. Interacts with TGFBR1; induces MAP3K7/TAK1 activation by TRAF6. Interacts with MAPK8IP1 and SMAD6. Interacts with isoform 1 of VRK2. Interacts with DAB2; the interaction is induced by TGF-beta stimulation and may mediate TGF-beta stimulated JNK activation. Interacts with TRIM5. Part of a complex containing ITCH, NDFIP1 and MAP3K7. Interacts with IFIT5; the interaction synergizes the recruitment of IKK to MAP3K7 and enhances IKK phosphorylation. Interacts with PLEKHM1 (via N- and C-terminus). Found in a complex with SH3RF1, RAC2, MAP2K7/MKK7, MAPK8IP1/JIP1, MAPK8/JNK1 and MAPK9/JNK2. Interacts with SASH1. Interacts with RIPK1. Requires Mg(2+) as cofactor. In terms of processing, association with TAB1/MAP3K7IP1 promotes autophosphorylation at Ser-192 and subsequent activation. Association with TAB2/MAP3K7IP2, itself associated with free unanchored Lys-63 polyubiquitin chain, promotes autophosphorylation and subsequent activation of MAP3K7. Dephosphorylation at Ser-192 by PPM1B/PP2CB and at Thr-187 by PP2A and PPP6C leads to inactivation. Post-translationally, 'Lys-48'-linked polyubiquitination at Lys-72 is induced by TNFalpha, and leads to proteasomal degradation. Undergoes 'Lys-48'-linked polyubiquitination catalyzed by ITCH. 'Lys-63'-linked polyubiquitination at Lys-158 by TRIM8 does not lead to proteasomal degradation but contributes to autophosphorylation and activation. Deubiquitinated by CYLD, a protease that selectively cleaves 'Lys-63'-linked ubiquitin chains. Deubiquitinated by USP19; leading to negative regulation of TNF-alpha- and IL-1beta-triggered NF-kappa-B activation.

Its subcellular location is the cytoplasm. It is found in the cell membrane. It carries out the reaction L-seryl-[protein] + ATP = O-phospho-L-seryl-[protein] + ADP + H(+). It catalyses the reaction L-threonyl-[protein] + ATP = O-phospho-L-threonyl-[protein] + ADP + H(+). Its activity is regulated as follows. Activated by pro-inflammatory cytokines and in response to physical and chemical stresses, including osmotic stress, oxidative stress, arsenic and ultraviolet light irradiation. Activated by 'Lys-63'-linked polyubiquitination and by autophosphorylation. Association with TAB1/MAP3K7IP1 and TAB2/MAP3K7IP2 promotes activation through autophosphorylation, whereas PPM1B/PP2CB, PP2A and PPP6C dephosphorylation leads to inactivation. Ceramides are also able to activate MAP3K7/TAK1. Functionally, serine/threonine kinase which acts as an essential component of the MAP kinase signal transduction pathway. Plays an important role in the cascades of cellular responses evoked by changes in the environment. Mediates signal transduction of TRAF6, various cytokines including interleukin-1 (IL-1), transforming growth factor-beta (TGFB), TGFB-related factors like BMP2 and BMP4, toll-like receptors (TLR), tumor necrosis factor receptor CD40 and B-cell receptor (BCR). Once activated, acts as an upstream activator of the MKK/JNK signal transduction cascade and the p38 MAPK signal transduction cascade through the phosphorylation and activation of several MAP kinase kinases like MAP2K1/MEK1, MAP2K3/MKK3, MAP2K6/MKK6 and MAP2K7/MKK7. These MAP2Ks in turn activate p38 MAPKs and c-jun N-terminal kinases (JNKs); both p38 MAPK and JNK pathways control the transcription factors activator protein-1 (AP-1). Independently of MAP2Ks and p38 MAPKs, acts as a key activator of NF-kappa-B by promoting activation of the I-kappa-B-kinase (IKK) core complex. Mechanistically, recruited to polyubiquitin chains of RIPK2 and IKBKG/NEMO via TAB2/MAP3K7IP2 and TAB3/MAP3K7IP3, and catalyzes phosphorylation and activation of IKBKB/IKKB component of the IKK complex, leading to NF-kappa-B activation. In osmotic stress signaling, plays a major role in the activation of MAPK8/JNK1, but not that of NF-kappa-B. Promotes TRIM5 capsid-specific restriction activity. Phosphorylates RIPK1 at 'Ser-321' which positively regulates RIPK1 interaction with RIPK3 to promote necroptosis but negatively regulates RIPK1 kinase activity and its interaction with FADD to mediate apoptosis. Phosphorylates STING1 in response to cGAMP-activation, promoting association between STEEP1 and STING1 and STING1 translocation to COPII vesicles. This chain is Mitogen-activated protein kinase kinase kinase 7 (MAP3K7), found in Bos taurus (Bovine).